The primary structure comprises 688 residues: Polyribonucleotide nucleotidyltransferase (688 aa).

Mg(2+)-binding residues include D484 and D490. The 60-residue stretch at 550-609 (PQTEIFNVAPDKIIEIIGQGGRVIKEIVEKFEVKIDLNTPSGEVKIMGNKERVLKTKEFI) folds into the KH domain. Residues 626–688 (DEVLEAQVKR…NKGKIALDLA (63 aa)) enclose the S1 motif domain.

It belongs to the polyribonucleotide nucleotidyltransferase family. Mg(2+) serves as cofactor.

It is found in the cytoplasm. The enzyme catalyses RNA(n+1) + phosphate = RNA(n) + a ribonucleoside 5'-diphosphate. In terms of biological role, involved in mRNA degradation. Catalyzes the phosphorolysis of single-stranded polyribonucleotides processively in the 3'- to 5'-direction. This chain is Polyribonucleotide nucleotidyltransferase, found in Helicobacter pylori (strain J99 / ATCC 700824) (Campylobacter pylori J99).